Consider the following 115-residue polypeptide: Parathyroid hormone (115 aa).

A signal peptide spans 1–25 (MMSAKDTVKVMVVMLAICFLARSDG). The propeptide occupies 26–31 (KPIKKR). An important for receptor binding region spans residues 51–69 (RVEWLRKKLQDVHNFVALG). The tract at residues 75-98 (RDGGSQRPRKKEDNVLVESHQKSL) is disordered.

It belongs to the parathyroid hormone family. Interacts with PTH1R (via N-terminal extracellular domain).

The protein localises to the secreted. Its function is as follows. Parathyroid hormone elevates calcium level by dissolving the salts in bone and preventing their renal excretion. Acts by binding to its receptor, PTH1R, activating G protein-coupled receptor signaling. Stimulates [1-14C]-2-deoxy-D-glucose (2DG) transport and glycogen synthesis in osteoblastic cells. This chain is Parathyroid hormone (PTH), found in Sus scrofa (Pig).